The primary structure comprises 206 residues: Probable N-acetyltransferase 14 (206 aa).

The N-acetyltransferase domain occupies 6-206; that stretch reads LSVREMREDE…MLVREFSKDL (201 aa). Residues 57–77 traverse the membrane as a helical segment; the sequence is FILASFALALLLPVFLAVAAV.

It belongs to the camello family.

The protein resides in the membrane. In terms of biological role, probable acetyltransferase that binds the 5'-GGACTACAG-3' sequence of coproporphyrinogen oxidase promoter. Able to activate transcription of a reporter construct in vitro. Its function is as follows. Probable acetyltransferase. Functionally, may act as a transcription factor regulating the expression of coproporphyrinogen oxidase by binding to a promoter regulatory element. In Mus musculus (Mouse), this protein is Probable N-acetyltransferase 14 (Nat14).